Here is a 327-residue protein sequence, read N- to C-terminus: Phenylalanine--tRNA ligase alpha subunit (327 aa).

Glu252 contacts Mg(2+).

Belongs to the class-II aminoacyl-tRNA synthetase family. Phe-tRNA synthetase alpha subunit type 1 subfamily. As to quaternary structure, tetramer of two alpha and two beta subunits. The cofactor is Mg(2+).

The protein localises to the cytoplasm. The catalysed reaction is tRNA(Phe) + L-phenylalanine + ATP = L-phenylalanyl-tRNA(Phe) + AMP + diphosphate + H(+). The sequence is that of Phenylalanine--tRNA ligase alpha subunit from Shewanella frigidimarina (strain NCIMB 400).